We begin with the raw amino-acid sequence, 288 residues long: NGG1-interacting factor 3 (288 aa).

The protein belongs to the GTP cyclohydrolase I type 2/NIF3 family. As to quaternary structure, may interact with NGG1.

The protein resides in the mitochondrion. The sequence is that of NGG1-interacting factor 3 from Saccharomyces cerevisiae (strain ATCC 204508 / S288c) (Baker's yeast).